The chain runs to 298 residues: Lipoyl synthase (298 aa).

7 residues coordinate [4Fe-4S] cluster: Cys40, Cys45, Cys51, Cys67, Cys71, Cys74, and Ser280. Positions 53–269 (AVRRTATFMI…KEIALSKGFS (217 aa)) constitute a Radical SAM core domain.

It belongs to the radical SAM superfamily. Lipoyl synthase family. The cofactor is [4Fe-4S] cluster.

The protein localises to the cytoplasm. It catalyses the reaction [[Fe-S] cluster scaffold protein carrying a second [4Fe-4S](2+) cluster] + N(6)-octanoyl-L-lysyl-[protein] + 2 oxidized [2Fe-2S]-[ferredoxin] + 2 S-adenosyl-L-methionine + 4 H(+) = [[Fe-S] cluster scaffold protein] + N(6)-[(R)-dihydrolipoyl]-L-lysyl-[protein] + 4 Fe(3+) + 2 hydrogen sulfide + 2 5'-deoxyadenosine + 2 L-methionine + 2 reduced [2Fe-2S]-[ferredoxin]. It participates in protein modification; protein lipoylation via endogenous pathway; protein N(6)-(lipoyl)lysine from octanoyl-[acyl-carrier-protein]. Catalyzes the radical-mediated insertion of two sulfur atoms into the C-6 and C-8 positions of the octanoyl moiety bound to the lipoyl domains of lipoate-dependent enzymes, thereby converting the octanoylated domains into lipoylated derivatives. This Geobacillus thermodenitrificans (strain NG80-2) protein is Lipoyl synthase.